The following is a 485-amino-acid chain: Malonate-semialdehyde dehydrogenase (485 aa).

Residues F155, K179, E182, R183, and S232 each contribute to the NAD(+) site. Residue C287 is the Nucleophile of the active site. E386 contributes to the NAD(+) binding site.

It belongs to the aldehyde dehydrogenase family. IolA subfamily. As to quaternary structure, homotetramer.

The catalysed reaction is 3-oxopropanoate + NAD(+) + CoA + H2O = hydrogencarbonate + acetyl-CoA + NADH + H(+). It carries out the reaction 2-methyl-3-oxopropanoate + NAD(+) + CoA + H2O = propanoyl-CoA + hydrogencarbonate + NADH + H(+). It functions in the pathway polyol metabolism; myo-inositol degradation into acetyl-CoA; acetyl-CoA from myo-inositol: step 7/7. Functionally, catalyzes the oxidation of malonate semialdehyde (MSA) and methylmalonate semialdehyde (MMSA) into acetyl-CoA and propanoyl-CoA, respectively. Is involved in a myo-inositol catabolic pathway. Bicarbonate, and not CO2, is the end-product of the enzymatic reaction. The protein is Malonate-semialdehyde dehydrogenase of Halalkalibacterium halodurans (strain ATCC BAA-125 / DSM 18197 / FERM 7344 / JCM 9153 / C-125) (Bacillus halodurans).